Here is a 413-residue protein sequence, read N- to C-terminus: Arginine biosynthesis bifunctional protein ArgJ 1 (413 aa).

Thr154, Lys180, Thr191, Glu277, Asn408, and Thr413 together coordinate substrate. Thr191 (nucleophile) is an active-site residue.

This sequence belongs to the ArgJ family. As to quaternary structure, heterotetramer of two alpha and two beta chains.

The protein resides in the cytoplasm. The catalysed reaction is N(2)-acetyl-L-ornithine + L-glutamate = N-acetyl-L-glutamate + L-ornithine. The enzyme catalyses L-glutamate + acetyl-CoA = N-acetyl-L-glutamate + CoA + H(+). Its pathway is amino-acid biosynthesis; L-arginine biosynthesis; L-ornithine and N-acetyl-L-glutamate from L-glutamate and N(2)-acetyl-L-ornithine (cyclic): step 1/1. It participates in amino-acid biosynthesis; L-arginine biosynthesis; N(2)-acetyl-L-ornithine from L-glutamate: step 1/4. Functionally, catalyzes two activities which are involved in the cyclic version of arginine biosynthesis: the synthesis of N-acetylglutamate from glutamate and acetyl-CoA as the acetyl donor, and of ornithine by transacetylation between N(2)-acetylornithine and glutamate. The sequence is that of Arginine biosynthesis bifunctional protein ArgJ 1 from Nostoc sp. (strain PCC 7120 / SAG 25.82 / UTEX 2576).